A 388-amino-acid polypeptide reads, in one-letter code: MSTLQAVKYIRGKLEVLDQLRLPHEFHYDEVSNRTEAFDSIYTMRVRGAPAIAIVAALGLAVELHNGSCTASSAEETIGQIEEALDYLKESRPTAVDLTNAINQLKARIREVGSTATKEAIISAFIEEAEKIFEKDLKTNLSIGDFGAEWLRAQVGASPEQQISVLTHCNTGSLATSGHGTALGIIRTLQAKKLLHHAFCTETRPYNQGSRLTAFELVFEGIPSTLITDSMAASLFRTRKQEKNIAAVIVGADRVVRNGDTANKIGTYQLAVLAKHHGVKFIVAAPTTSIDLETETGDGIKIEERKKEELTQVTGAVIKPDGTVDESSKVRVATADQRINVWNPAFDVTPAEFIDAVVTEKGAIEKGPDGKFDFSQILPERWAKITGA.

The Proton donor role is filled by D253.

This sequence belongs to the eIF-2B alpha/beta/delta subunits family. MtnA subfamily.

It localises to the cytoplasm. It is found in the nucleus. The enzyme catalyses 5-(methylsulfanyl)-alpha-D-ribose 1-phosphate = 5-(methylsulfanyl)-D-ribulose 1-phosphate. It participates in amino-acid biosynthesis; L-methionine biosynthesis via salvage pathway; L-methionine from S-methyl-5-thio-alpha-D-ribose 1-phosphate: step 1/6. Functionally, catalyzes the interconversion of methylthioribose-1-phosphate (MTR-1-P) into methylthioribulose-1-phosphate (MTRu-1-P). This Fusarium vanettenii (strain ATCC MYA-4622 / CBS 123669 / FGSC 9596 / NRRL 45880 / 77-13-4) (Fusarium solani subsp. pisi) protein is Methylthioribose-1-phosphate isomerase.